The sequence spans 264 residues: MGQKIHPTGFRLAVTRNWSSRWYADDKDFGGMLAEDIRVREYLKKKLKSASVGRVVIERPAKNARITVYSARPGVVIGKRGEDIESLKADLQRLMGVPVHVNIEEIRKPETDAQLIADSISQQLEKRIMFRRAMKRAMQNAMRLGAQGIKIMSSGRLNGIEIARTEWYREGRVPLHTLKANIDYGTSEAHTTYGVIGIKVWVYKGDMLANGELPVETAAPREEERRPRRAPRGDRPDGARNGRPGGGRGRAPRKADAAPAPEGE.

Residues 39–107 (VREYLKKKLK…PVHVNIEEIR (69 aa)) form the KH type-2 domain. The disordered stretch occupies residues 214–264 (PVETAAPREEERRPRRAPRGDRPDGARNGRPGGGRGRAPRKADAAPAPEGE). Positions 219–240 (APREEERRPRRAPRGDRPDGAR) are enriched in basic and acidic residues.

The protein belongs to the universal ribosomal protein uS3 family. Part of the 30S ribosomal subunit. Forms a tight complex with proteins S10 and S14.

Functionally, binds the lower part of the 30S subunit head. Binds mRNA in the 70S ribosome, positioning it for translation. This Bordetella avium (strain 197N) protein is Small ribosomal subunit protein uS3.